We begin with the raw amino-acid sequence, 262 residues long: Small ribosomal subunit protein eS1 (262 aa).

It belongs to the eukaryotic ribosomal protein eS1 family. As to quaternary structure, component of the small ribosomal subunit. Mature ribosomes consist of a small (40S) and a large (60S) subunit. The 40S subunit contains about 33 different proteins and 1 molecule of RNA (18S). The 60S subunit contains about 49 different proteins and 3 molecules of RNA (25S, 5.8S and 5S).

Its subcellular location is the cytoplasm. The sequence is that of Small ribosomal subunit protein eS1 from Theileria parva (East coast fever infection agent).